A 287-amino-acid polypeptide reads, in one-letter code: Nucleotide-binding protein Gbem_0872 (287 aa).

An ATP-binding site is contributed by Gly8–Ser15. Asp59 to Ser62 contributes to the GTP binding site.

This sequence belongs to the RapZ-like family.

Its function is as follows. Displays ATPase and GTPase activities. The protein is Nucleotide-binding protein Gbem_0872 of Citrifermentans bemidjiense (strain ATCC BAA-1014 / DSM 16622 / JCM 12645 / Bem) (Geobacter bemidjiensis).